The chain runs to 389 residues: Chalcone synthase 2 (389 aa).

C164 is a catalytic residue.

Belongs to the thiolase-like superfamily. Chalcone/stilbene synthases family.

The catalysed reaction is (E)-4-coumaroyl-CoA + 3 malonyl-CoA + 3 H(+) = 2',4,4',6'-tetrahydroxychalcone + 3 CO2 + 4 CoA. The protein operates within secondary metabolite biosynthesis; flavonoid biosynthesis. Functionally, the primary product of this enzyme is 4,2',4',6'-tetrahydroxychalcone (also termed naringenin-chalcone or chalcone) which can under specific conditions spontaneously isomerize into naringenin. The polypeptide is Chalcone synthase 2 (CHS2) (Solanum lycopersicum (Tomato)).